We begin with the raw amino-acid sequence, 171 residues long: Tetratricopeptide repeat protein 9C (171 aa).

3 TPR repeats span residues 8 to 41, 72 to 107, and 108 to 141; these read AQLY…LRGL, TDCY…QPDN, and AKAL…KPKD.

The protein belongs to the TTC9 family.

This is Tetratricopeptide repeat protein 9C (TTC9C) from Bos taurus (Bovine).